A 94-amino-acid chain; its full sequence is MQQEALGMVETKGLTAAIEAADAMVKSANVMLVGYEKIGSGLVTVIVRGDVGAVKAATDAGAAAARNVGEVKAVHVIPRPHTDVEKILPKGISQ.

The BMC domain maps to 5 to 89 (ALGMVETKGL…PHTDVEKILP (85 aa)).

It belongs to the bacterial microcompartments protein family. In terms of assembly, homohexamer with a central pore of about 5.6 Angstroms in diameter. The hexamers pack against each other in arrays. Interacts with the N-terminus of PduP which targets PduP to the BMC. Modeling suggests PduC, PduD, PduE, PduL and PduP interact with a cleft formed by the C-terminal segments of 2 adjacent PduA subunits (on the BMC luminal side) in the hexamer.

Its subcellular location is the bacterial microcompartment. The protein operates within polyol metabolism; 1,2-propanediol degradation. Functionally, one of the major shell proteins of the bacterial microcompartment (BMC) dedicated to 1,2-propanediol (1,2-PD) degradation. At least one of PduA or PduJ is required for BMC assembly; it must be encoded as the first gene in the pdu operon. Not required for structural integrity of BMCs, it is required to mitigate propionaldehyde toxicity. Controls diffusion of 1,2-PD into and propionaldehyde out of the BMC shell; residue 40 is particularly important for pore permeability. Overexpression of this protein leads to aberrant filaments that extend the length of the cell, cross the cleavage furrow and impair division. The filaments form nanotubes with a hollow center. The isolated BMC shell component protein ratio for J:A:B':B:K:T:U is approximately 15:10:7:6:1:1:2. Edge residues (particularly Lys-26) are important for function and assembly of the BMC, and influence array formation by hexamers. Interaction with PduA allows encapsulation of at least PduP in BMCs. Probably also targets PduD to the BMC. PduA is probably the hub for binding multiple enzymes to the interior of the BMC; modeling suggests PduC, PduD, PduE, PduG, PduL and PduP are targeted to PduA. Its function is as follows. The 1,2-PD-specific bacterial microcompartment (BMC) concentrates low levels of 1,2-PD catabolic enzymes, concentrates volatile reaction intermediates thus enhancing pathway flux and keeps the level of toxic, mutagenic propionaldehyde low. The polypeptide is Bacterial microcompartment shell protein PduA (Salmonella typhimurium (strain LT2 / SGSC1412 / ATCC 700720)).